We begin with the raw amino-acid sequence, 1292 residues long: Zinc finger protein 423 (1292 aa).

Residues 1-11 (MSRRKQAKPRS) are compositionally biased toward basic residues. 3 disordered regions span residues 1-21 (MSRR…EASD), 33-70 (AGGL…EDVE), and 95-125 (AHRC…SPTQ). The segment covering 41 to 54 (ECDRKTSRALEDRN) has biased composition (basic and acidic residues). A phosphoserine mark is found at Ser55 and Ser58. The C2H2-type 1; degenerate zinc finger occupies 75 to 101 (YTCDHCQQDFESLADLTDHRAHRCPGD). The span at 110–125 (WVASSPSSKDVASPTQ) shows a compositional bias: polar residues. 7 consecutive C2H2-type zinc fingers follow at residues 146–168 (YPCQ…EQIH), 174–196 (FKCT…IKLH), 202–224 (YHCH…LKTH), 230–252 (FKCS…MQAH), 271–294 (FMCD…LTLH), 303–326 (LQCI…HQAH), and 331–353 (HKCP…LDSH). The disordered stretch occupies residues 354-407 (RQPDSSNHSVSPDPVLGSVASMSSATPDSSASVERGSTPDSTLKPLRGQKKMRD). Residues 371 to 385 (SVASMSSATPDSSAS) show a composition bias toward low complexity. A C2H2-type 9; degenerate zinc finger spans residues 417-441 (YSCPYCSKRDFTSLAVLEIHLKTIH). 3 C2H2-type zinc fingers span residues 449-472 (HTCQ…RKLH), 488-511 (FHCN…RVSH), and 525-548 (FFCN…QQAH). A C2H2-type 13; atypical zinc finger spans residues 571-596 (YSCPYCTNSPIFGSILKLTKHIKENH). Residues 598-635 (NIPLAHSKKSKAEQSPVSSDVEVSSPKRQRLSGSANSI) are disordered. Ser612 is modified (phosphoserine). The span at 612–623 (SPVSSDVEVSSP) shows a compositional bias: low complexity. 7 consecutive C2H2-type zinc fingers follow at residues 640 to 662 (YPCN…LKLH), 670 to 692 (QACP…LTVH), 700 to 723 (YVCE…LDMH), 728 to 751 (YHCT…AVKH), 758 to 781 (YRCT…KHSH), 789 to 811 (HKCI…ITTH), and 815 to 838 (YNCR…REKH). The segment at 894 to 916 (YGCDICGAAYTMEVLLQNHRLRD) adopts a C2H2-type 21; degenerate zinc-finger fold. 3 C2H2-type zinc fingers span residues 938 to 960 (HKCN…LQTH), 967 to 989 (YMCP…KVTH), and 1028 to 1050 (FRCV…GTFH). A Phosphoserine modification is found at Ser1062. The segment at 1072-1090 (YKCALCLKEFRSKQDLVRL) adopts a C2H2-type 25; degenerate zinc-finger fold. 5 C2H2-type zinc fingers span residues 1128-1151 (LRCP…QVDH), 1176-1198 (YQCI…VANH), 1206-1228 (HECK…LIEH), 1237-1260 (FKCP…FAVH), and 1267-1290 (YDCS…MSQH). The segment covering 1144 to 1155 (ESHMQVDHRDLT) has biased composition (basic and acidic residues). The interval 1144–1171 (ESHMQVDHRDLTPETSGPRKGAQTSPVP) is disordered.

Belongs to the krueppel C2H2-type zinc-finger protein family. As to quaternary structure, homodimer. Interacts with SMAD1 and SMAD4. Interacts with EBF1. Interacts with PARP1. Interacts with CEP290. As to expression, within the cerebellum, Zfp423 is expressed in both ventricular and external germinal zones. Transiently expressed in newly differentiating olfactory-receptor neurons.

Its subcellular location is the nucleus. Functionally, transcription factor that can both act as an activator or a repressor depending on the context. Plays a central role in BMP signaling and olfactory neurogenesis. Associates with SMADs in response to BMP2 leading to activate transcription of BMP target genes. Acts as a transcriptional repressor via its interaction with EBF1, a transcription factor involved in terminal olfactory receptor neurons differentiation; this interaction preventing EBF1 to bind DNA and activate olfactory-specific genes. Involved in olfactory neurogenesis by participating in a developmental switch that regulates the transition from differentiation to maturation in olfactory receptor neurons. Controls proliferation and differentiation of neural precursors in cerebellar vermis formation. The chain is Zinc finger protein 423 (Znf423) from Mus musculus (Mouse).